The primary structure comprises 982 residues: Cell division cycle-associated protein 2 (982 aa).

Polar residues predominate over residues 75 to 87; the sequence is VKTSSGKSTSSLQ. The disordered stretch occupies residues 75–97; that stretch reads VKTSSGKSTSSLQKARRRSTVGV. Phosphoserine is present on residues Ser100, Ser122, and Ser133. 2 disordered regions span residues 192–216 and 274–315; these read SGFP…NYLS and TPLS…CGSS. 2 stretches are compositionally biased toward polar residues: residues 207 to 216 and 275 to 315; these read SQDSPDNYLS and PLSS…CGSS. Phosphoserine is present on residues Ser286, Ser296, and Ser306. Thr309 carries the phosphothreonine modification. Positions 379–436 constitute a PP1-binding domain; that stretch reads KRKRVTFGEDLSPEVFDESLPANTPLCKGGTPVRPRTVKTTSPLQSPVHEQFLQPNFD. Residues Ser390 and Ser397 each carry the phosphoserine modification. Disordered stretches follow at residues 400–473, 489–545, 568–638, and 651–716; these read ANTP…NTCS, TRTS…KSYR, KPLL…QSQV, and ASER…PQSQ. Thr402 carries the post-translational modification Phosphothreonine. Ser424 carries the post-translational modification Phosphoserine. Polar residues-rich tracts occupy residues 451–473 and 498–512; these read SFAN…NTCS and TLSS…TTQA. Residues 518 to 545 show a composition bias toward basic residues; that stretch reads KMSRRKSREKKHTSAALPKKKQVLKSYR. Phosphoserine occurs at positions 572 and 595. Over residues 651 to 668 the composition is skewed to polar residues; it reads ASERGPNASTRDTGSEGN. Residues 669–685 show a composition bias toward basic and acidic residues; that stretch reads TRAESKCQSAKEPKPGT. Position 735 is a phosphoserine (Ser735). A Glycyl lysine isopeptide (Lys-Gly) (interchain with G-Cter in SUMO2) cross-link involves residue Lys741. Residues 910 to 982 form a disordered region; sequence ECPSSKEETI…SLKGESAQLP (73 aa). Ser913 carries the phosphoserine modification. Residues 931–942 are compositionally biased toward low complexity; that stretch reads VSGSESQGVGSS. Ser950 carries the post-translational modification Phosphoserine. The span at 952–964 shows a compositional bias: polar residues; that stretch reads CGSTLTDANSATQ. Phosphoserine is present on Ser973.

As to quaternary structure, interacts with PPP1CC. Phosphorylated by CDK1. May regulate its subcellular location.

It localises to the nucleus. In terms of biological role, regulator of chromosome structure during mitosis required for condensin-depleted chromosomes to retain their compact architecture through anaphase. Acts by mediating the recruitment of phopsphatase PP1-gamma subunit (PPP1CC) to chromatin at anaphase and into the following interphase. At anaphase onset, its association with chromatin targets a pool of PPP1CC to dephosphorylate substrates. This is Cell division cycle-associated protein 2 (Cdca2) from Mus musculus (Mouse).